Consider the following 120-residue polypeptide: Succinate dehydrogenase membrane anchor subunit (120 aa).

Over 1 to 17 (MTEKLLHFIRTKSGSMH) the chain is Mitochondrial matrix. Residues 18–38 (WWLQRFLAILLAPIILYLLFD) traverse the membrane as a helical segment. The Mitochondrial intermembrane portion of the chain corresponds to 39–63 (VAIYIGQQSDPTVMMFLNRIFNHNS). Residues 64–85 (IFIFITSVILIWHVRGGMEVII) traverse the membrane as a helical segment. Residue His-76 coordinates heme. Residues 86–95 (EDYVHGEKTR) are Mitochondrial matrix-facing. A ubiquinone is bound at residue Tyr-88. Residues 96-120 (IVSIFLIRVIAIEIMEYLYKCSIIF) traverse the membrane as a helical segment.

Part of an enzyme complex containing four subunits: a flavoprotein, an iron-sulfur protein, plus two membrane-anchoring proteins. The cofactor is heme.

Its subcellular location is the mitochondrion inner membrane. The protein operates within carbohydrate metabolism; tricarboxylic acid cycle. Membrane-anchoring subunit of succinate dehydrogenase (SDH). This is Succinate dehydrogenase membrane anchor subunit (SDH4) from Reclinomonas americana.